The primary structure comprises 433 residues: 3-phosphoshikimate 1-carboxyvinyltransferase (433 aa).

3 residues coordinate 3-phosphoshikimate: Lys-22, Ser-23, and Arg-27. Lys-22 lines the phosphoenolpyruvate pocket. Positions 95 and 123 each coordinate phosphoenolpyruvate. The 3-phosphoshikimate site is built by Ser-167, Gln-169, Asp-315, and Lys-342. A phosphoenolpyruvate-binding site is contributed by Gln-169. The Proton acceptor role is filled by Asp-315. The phosphoenolpyruvate site is built by Arg-346 and Arg-387.

It belongs to the EPSP synthase family. As to quaternary structure, monomer.

Its subcellular location is the cytoplasm. It carries out the reaction 3-phosphoshikimate + phosphoenolpyruvate = 5-O-(1-carboxyvinyl)-3-phosphoshikimate + phosphate. The protein operates within metabolic intermediate biosynthesis; chorismate biosynthesis; chorismate from D-erythrose 4-phosphate and phosphoenolpyruvate: step 6/7. Functionally, catalyzes the transfer of the enolpyruvyl moiety of phosphoenolpyruvate (PEP) to the 5-hydroxyl of shikimate-3-phosphate (S3P) to produce enolpyruvyl shikimate-3-phosphate and inorganic phosphate. The polypeptide is 3-phosphoshikimate 1-carboxyvinyltransferase (Legionella pneumophila (strain Lens)).